The chain runs to 228 residues: UPF0173 metal-dependent hydrolase RBAM_026340 (228 aa).

Belongs to the UPF0173 family.

This is UPF0173 metal-dependent hydrolase RBAM_026340 from Bacillus velezensis (strain DSM 23117 / BGSC 10A6 / LMG 26770 / FZB42) (Bacillus amyloliquefaciens subsp. plantarum).